The sequence spans 195 residues: Xanthine phosphoribosyltransferase (195 aa).

Xanthine-binding residues include leucine 20 and asparagine 27. 128–132 provides a ligand contact to 5-phospho-alpha-D-ribose 1-diphosphate; it reads ANGQA. Lysine 156 lines the xanthine pocket.

This sequence belongs to the purine/pyrimidine phosphoribosyltransferase family. Xpt subfamily. In terms of assembly, homodimer.

Its subcellular location is the cytoplasm. It catalyses the reaction XMP + diphosphate = xanthine + 5-phospho-alpha-D-ribose 1-diphosphate. Its pathway is purine metabolism; XMP biosynthesis via salvage pathway; XMP from xanthine: step 1/1. Its function is as follows. Converts the preformed base xanthine, a product of nucleic acid breakdown, to xanthosine 5'-monophosphate (XMP), so it can be reused for RNA or DNA synthesis. This Lactiplantibacillus plantarum (strain ATCC BAA-793 / NCIMB 8826 / WCFS1) (Lactobacillus plantarum) protein is Xanthine phosphoribosyltransferase.